We begin with the raw amino-acid sequence, 384 residues long: Potassium channel subfamily K member 18 (384 aa).

Topologically, residues 1–23 (MEVSGHPQARRCCPEALGKLFPG) are cytoplasmic. The helical transmembrane segment at 24–44 (LCFLCFLVTYALVGAVVFSAI) threads the bilayer. An N-linked (GlcNAc...) asparagine glycan is attached at Asn-70. The segment at residues 103-129 (FLSSLFFCCTVFSTVGYGYIYPVTRLG) is an intramembrane region (pore-forming). Positions 116, 117, 118, and 119 each coordinate K(+). Positions 116 to 121 (TVGYGY) are selectivity filter 1. The chain crosses the membrane as a helical span at residues 130–148 (KYLCMLYALFGIPLMFLVL). The Cytoplasmic segment spans residues 149-280 (TDTGDILATI…EVGQQVERLD (132 aa)). Residues 200 to 205 (PQIIIS) are interaction with calcineurin. The interval 249–254 (RSNSCP) is interaction with YWHAH. Residues Ser-252 and Ser-264 each carry the phosphoserine modification. The helical transmembrane segment at 281–301 (IPLPIIALIVFAYISCAAAIL) threads the bilayer. Residues 314–328 (FYFCFVTLTTIGFGD) constitute an intramembrane region (pore-forming). Residues 323-328 (TIGFGD) form a selectivity filter 2 region. Residues 335–355 (NFFLFFSIYIIVGMEIVFIAF) form a helical membrane-spanning segment. Over 356-384 (KLVQNRLIDIYKNVMLFFAKGKFYHLVKK) the chain is Cytoplasmic.

It belongs to the two pore domain potassium channel (TC 1.A.1.8) family. In terms of assembly, homodimer. Heterodimer with KCNK2. Heterodimer with KCNK10. Interacts with calcineurin. Interacts with YWHAH, in a phosphorylation-dependent manner. N-glycosylated. Post-translationally, phosphorylation of Ser-264 is required for the binding of 14-3-3eta/YWHAH. Calcineurin-mediated dephosphorylation enhances channel activity. In terms of tissue distribution, expressed in dorsal root ganglion and trigeminal ganglion neurons. Detected at low levels in spinal cord. Expressed in regulatory T cells (at protein level).

The protein localises to the cell membrane. It carries out the reaction K(+)(in) = K(+)(out). Activated by volatile anesthetics but inhibited by amide local anesthetics. Inhibited by Ba(2+) ions. Inhibited by free polyunsaturated fatty acids. Channel conductance is sensitive to intracellular pH, it decreases at acidic pH and increases at basic pH. In contrast to its mouse ortholog, it is not regulated by extracellular protons. Insensitive to changes in temperature. In terms of biological role, k(+) channel that conducts outward and inward rectifying currents at depolarized and hyperpolarized membrane potentials, respectively. The outward rectifying currents are voltage-dependent, coupled to K(+) electrochemical gradient across the membrane, whereas the inward currents can be induced in response to activation of Ca(2+)-mobilizing receptors. Homo- and heterodimerizes to form functional channels with distinct regulatory and gating properties. In trigeminal ganglia sensory neurons, the heterodimers of KCNK18/TRESK and KCNK2/TREK-1 or KCNK10/TREK-2 inhibit neuronal firing and neurogenic inflammation by stabilizing the resting membrane potential at K(+) equilibrium potential as well as by regulating the threshold of action potentials and the spike frequency. In thymocytes, conducts K(+) currents upon T cell receptor (TCR) signaling leading to sustained Ca(2+) influx and NF-kappa-B activation, FOXP3 transcription and positive selection of regulatory T cell (Treg) progenitor subsets. Appears to mediate the analgesics effects of hydroxy-alpha-sanshool, a metabolite naturally present in Schezuan pepper and other Xanthoxylum plants. In Homo sapiens (Human), this protein is Potassium channel subfamily K member 18.